The following is a 311-amino-acid chain: 4-hydroxyproline 2-epimerase (311 aa).

Catalysis depends on Cys-89, which acts as the Proton acceptor. Residues 90-91, His-209, and Asp-233 contribute to the substrate site; that span reads GH. Residue Cys-237 is the Proton donor of the active site. Substrate is bound at residue 238 to 239; the sequence is GT.

Belongs to the proline racemase family.

It catalyses the reaction trans-4-hydroxy-L-proline = cis-4-hydroxy-D-proline. Functionally, catalyzes the epimerization of trans-4-hydroxy-L-proline (t4LHyp) to cis-4-hydroxy-D-proline (c4DHyp). Is likely involved in a degradation pathway that converts t4LHyp to alpha-ketoglutarate. Displays no proline racemase activity. The sequence is that of 4-hydroxyproline 2-epimerase from Burkholderia ambifaria (strain ATCC BAA-244 / DSM 16087 / CCUG 44356 / LMG 19182 / AMMD) (Burkholderia cepacia (strain AMMD)).